Here is a 440-residue protein sequence, read N- to C-terminus: Nitrilase and fragile histidine triad fusion protein NitFhit (440 aa).

The CN hydrolase domain maps to 14 to 264 (RHFIAVCQMT…VDMCFAEIDL (251 aa)). Active-site residues include Glu54, Lys127, and Cys169. Residues 297 to 405 (GGLKFARFNI…LPRRAGDFGD (109 aa)) form the HIT domain. The Histidine triad motif motif lies at 390 to 394 (HVHIH). The Tele-AMP-histidine intermediate role is filled by His392.

In the N-terminal section; belongs to the UPF0012 family. Homotetramer. Mn(2+) is required as a cofactor.

It catalyses the reaction P(1),P(3)-bis(5'-adenosyl) triphosphate + H2O = AMP + ADP + 2 H(+). Cleaves A-5'-PPP-5'A to yield AMP and ADP. This Caenorhabditis elegans protein is Nitrilase and fragile histidine triad fusion protein NitFhit.